Here is a 92-residue protein sequence, read N- to C-terminus: Small ribosomal subunit protein uS19 (92 aa).

The protein belongs to the universal ribosomal protein uS19 family.

Protein S19 forms a complex with S13 that binds strongly to the 16S ribosomal RNA. This chain is Small ribosomal subunit protein uS19, found in Nitrobacter winogradskyi (strain ATCC 25391 / DSM 10237 / CIP 104748 / NCIMB 11846 / Nb-255).